A 639-amino-acid polypeptide reads, in one-letter code: MKLITILLLCSRLLPSLAQEEDAQEMDCNDESLFQAVDTALKKYNAGLKSGNQFVLYQVTEGTKKDGSKTFYSFKYQIKEGNCSVQSGFAWQDCDFKDAEEAATGECTATLEKRRNNKFSIATQICNITPGKGPIVTNEYHCLGCMHPISVDSPELGPVLKHAVEHFNNNTKHTHLFALGEVKSADRQVVAGMNYQIIYSIVQTNCSKEDFPSLHEDCVPLPSGDDGECKGNAFVDIHKTIAGFSDSCEFYPGDDLFELLPEDCPGCPRNIPVDSPELKEALGHSIAQLNAENNHTFYFKIDTVKKATSQVVAGTKYVIEFIARETKCSKESNAELTADCETKRLGQSLNCNANVYMRPWENKVVPTVKCKVLDMTSVIRRPPGFSPFRAPRVKKPKESTTVSPSYIARVQEERDPGNEQGPIHGHGWLHAKQIKNKNHQGHKHGHGIGHGHQKPHGLGHGHQLKLDDLKQQREDGYDHRHPVGHGHGQRHGHGHGHGHGRDKHTNKDKNNVKHTDQRRAPLTSSSEDNTTSTQIQGRTEGFTLNPPLAQPAVISRGFQDSGFTEGVIATTSPYDTETHDDLIPDIHVQPDSLSFKLISDFPEATSHKCPGRPWKPVSRKDPTIETTEFSDFDLLDALS.

The signal sequence occupies residues 1–18; the sequence is MKLITILLLCSRLLPSLA. Residues 28-132 form the Cystatin kininogen-type 1 domain; it reads CNDESLFQAV…TQICNITPGK (105 aa). 9 cysteine pairs are disulfide-bonded: Cys-28–Cys-609, Cys-83–Cys-94, Cys-107–Cys-126, Cys-142–Cys-145, Cys-206–Cys-218, Cys-229–Cys-248, Cys-264–Cys-267, Cys-328–Cys-340, and Cys-351–Cys-370. An N-linked (GlcNAc...) asparagine glycan is attached at Asn-82. One can recognise a Cystatin kininogen-type 2 domain in the interval 151–254; that stretch reads VDSPELGPVL…SDSCEFYPGD (104 aa). Residues Asn-169 and Asn-205 are each glycosylated (N-linked (GlcNAc...) asparagine). The region spanning 273–376 is the Cystatin kininogen-type 3 domain; the sequence is VDSPELKEAL…TVKCKVLDMT (104 aa). Asn-294 is a glycosylation site (N-linked (GlcNAc...) asparagine). A Phosphoserine modification is found at Ser-332. Disordered regions lie at residues 438 to 462 and 476 to 547; these read NHQGHKHGHGIGHGHQKPHGLGHGH and GYDH…LNPP. Basic residues predominate over residues 482–502; it reads PVGHGHGQRHGHGHGHGHGRD. Residues 503–519 are compositionally biased toward basic and acidic residues; sequence KHTNKDKNNVKHTDQRR. The segment covering 522–537 has biased composition (polar residues); the sequence is LTSSSEDNTTSTQIQG. The N-linked (GlcNAc...) asparagine glycan is linked to Asn-529.

Bradykinin is released from kininogen by plasma kallikrein. Post-translationally, phosphorylated by FAM20C in the extracellular medium. In terms of processing, bradykinin is inactivated by ACE, which removes the dipeptide Arg-Phe from its C-terminus. In terms of tissue distribution, plasma.

Its subcellular location is the secreted. It is found in the extracellular space. Its function is as follows. Kininogens are inhibitors of thiol proteases. HMW-kininogen plays an important role in blood coagulation by helping to position optimally prekallikrein and factor XI next to factor XII; HMW-kininogen inhibits the thrombin- and plasmin-induced aggregation of thrombocytes. LMW-kininogen inhibits the aggregation of thrombocytes. LMW-kininogen is in contrast to HMW-kininogen not involved in blood clotting. The active peptide bradykinin is a potent vasodilatator that is released from HMW-kininogen shows a variety of physiological effects: (A) influence in smooth muscle contraction, (B) induction of hypotension, (C) natriuresis and diuresis, (D) decrease in blood glucose level, (E) it is a mediator of inflammation and causes (E1) increase in vascular permeability, (E2) stimulation of nociceptors (4E3) release of other mediators of inflammation (e.g. prostaglandins), (F) it has a cardioprotective effect (directly via bradykinin action, indirectly via endothelium-derived relaxing factor action). The polypeptide is Kininogen-1 (Kng1) (Rattus norvegicus (Rat)).